Reading from the N-terminus, the 491-residue chain is Ketol-acid reductoisomerase (NADP(+)) (491 aa).

Residues 14–208 enclose the KARI N-terminal Rossmann domain; the sequence is LDQLGRCRFM…GGHRAGVLES (195 aa). Residues 45 to 48, Arg-68, Arg-76, Ser-78, and 108 to 110 contribute to the NADP(+) site; these read CGAQ and DKQ. His-132 is an active-site residue. NADP(+) is bound at residue Gly-158. KARI C-terminal knotted domains follow at residues 209–344 and 345–485; these read SFVA…NAPK and YEGK…MTDM. Residues Asp-217, Glu-221, Glu-389, and Glu-393 each coordinate Mg(2+). Residue Ser-414 participates in substrate binding.

The protein belongs to the ketol-acid reductoisomerase family. Mg(2+) is required as a cofactor.

It carries out the reaction (2R)-2,3-dihydroxy-3-methylbutanoate + NADP(+) = (2S)-2-acetolactate + NADPH + H(+). It catalyses the reaction (2R,3R)-2,3-dihydroxy-3-methylpentanoate + NADP(+) = (S)-2-ethyl-2-hydroxy-3-oxobutanoate + NADPH + H(+). It functions in the pathway amino-acid biosynthesis; L-isoleucine biosynthesis; L-isoleucine from 2-oxobutanoate: step 2/4. It participates in amino-acid biosynthesis; L-valine biosynthesis; L-valine from pyruvate: step 2/4. Involved in the biosynthesis of branched-chain amino acids (BCAA). Catalyzes an alkyl-migration followed by a ketol-acid reduction of (S)-2-acetolactate (S2AL) to yield (R)-2,3-dihydroxy-isovalerate. In the isomerase reaction, S2AL is rearranged via a Mg-dependent methyl migration to produce 3-hydroxy-3-methyl-2-ketobutyrate (HMKB). In the reductase reaction, this 2-ketoacid undergoes a metal-dependent reduction by NADPH to yield (R)-2,3-dihydroxy-isovalerate. The polypeptide is Ketol-acid reductoisomerase (NADP(+)) (Pasteurella multocida (strain Pm70)).